The primary structure comprises 347 residues: Extracellular metalloprotease (347 aa).

A signal peptide spans 1–20 (MKSRPICSVIPPYILHRIIA). A disordered region spans residues 43–68 (SHHPRPEPHEKLPAGQANRSIHDAEQ). His-162 contributes to the Zn(2+) binding site. The active site involves Glu-163. Zn(2+) is bound by residues His-166 and Glu-186. His-264 functions as the Proton donor in the catalytic mechanism.

Belongs to the peptidase M4 family. Requires Ca(2+) as cofactor. Zn(2+) is required as a cofactor.

It localises to the secreted. The sequence is that of Extracellular metalloprotease (prt1) from Pectobacterium carotovorum subsp. carotovorum (Erwinia carotovora subsp. carotovora).